The following is a 312-amino-acid chain: MRIPVGDFDLEMTQRSGQTSQPPWREVEGAFRELLIIEGVPCPVEVRNEAGVLRVRPYVDVPQKTLREKIEYIFDLKFDIEDFYTFLEDKNLSYTLDSSRGLRLFLAKDPFECVISSIASANCSVVRWTRSIEDIRRLWGQANTFNGETFHTFPSPHVLTGVAEGSLEDLQRAEDNLPSDFSFNDLRSCGVGYRAPYIRETSRILAEEMDIRRIDGMDYDDARELLLELSGVGPKVADCILLYGFRKTEAFPVDVWIRRIMNHIHPGRNFNDRSMVEFARREYGEMADYVQLYLFNHARRSGLLDRLRQGTG.

A disordered region spans residues Met1–Pro22. Over residues Thr13–Pro22 the composition is skewed to polar residues. The active site involves Lys235.

The protein belongs to the type-1 OGG1 family.

The enzyme catalyses 2'-deoxyribonucleotide-(2'-deoxyribose 5'-phosphate)-2'-deoxyribonucleotide-DNA = a 3'-end 2'-deoxyribonucleotide-(2,3-dehydro-2,3-deoxyribose 5'-phosphate)-DNA + a 5'-end 5'-phospho-2'-deoxyribonucleoside-DNA + H(+). Functionally, DNA repair enzyme that incises DNA at 8-oxoG residues. Excises 7,8-dihydro-8-oxoguanine and 2,6-diamino-4-hydroxy-5-N-methylformamidopyrimidine (FAPY) from damaged DNA. Has a beta-lyase activity that nicks DNA 3' to the lesion. This chain is Probable N-glycosylase/DNA lyase, found in Methanothermobacter thermautotrophicus (strain ATCC 29096 / DSM 1053 / JCM 10044 / NBRC 100330 / Delta H) (Methanobacterium thermoautotrophicum).